Consider the following 238-residue polypeptide: tRNA (guanine-N(7)-)-methyltransferase (238 aa).

Polar residues predominate over residues 1–12; it reads MTDTAENQTPND. A disordered region spans residues 1–20; the sequence is MTDTAENQTPNDRQAGHPRS. S-adenosyl-L-methionine-binding residues include E70, D95, D122, and D145. D145 is an active-site residue. Residues K149, D181, and 216 to 219 contribute to the substrate site; that span reads TKFE.

The protein belongs to the class I-like SAM-binding methyltransferase superfamily. TrmB family.

It carries out the reaction guanosine(46) in tRNA + S-adenosyl-L-methionine = N(7)-methylguanosine(46) in tRNA + S-adenosyl-L-homocysteine. The protein operates within tRNA modification; N(7)-methylguanine-tRNA biosynthesis. Catalyzes the formation of N(7)-methylguanine at position 46 (m7G46) in tRNA. In Neisseria meningitidis serogroup C (strain 053442), this protein is tRNA (guanine-N(7)-)-methyltransferase.